The following is a 623-amino-acid chain: Zinc finger protein 131 (623 aa).

The 65-residue stretch at 34–98 (TDITLIVDGH…TYTAKLMIQG (65 aa)) folds into the BTB domain. The Nuclear localization signal 1 signature appears at 137 to 148 (TGKNEAKKRKIA). C2H2-type zinc fingers lie at residues 261–283 (FHCE…MKSH), 288–311 (FKCE…NCYH), and 328–350 (HVCQ…LRKH). Glycyl lysine isopeptide (Lys-Gly) (interchain with G-Cter in SUMO2) cross-links involve residues Lys289 and Lys295. A Nuclear localization signal 2 motif is present at residues 317–328 (VSKKQRTGKKIH). The C2H2-type 4; degenerate zinc finger occupies 356–381 (FECPNCHERFARNSTLKCHLTACQTG). 2 consecutive C2H2-type zinc fingers follow at residues 392 to 414 (YECQ…LVIH) and 420 to 443 (NHCT…SDAH). Basic and acidic residues predominate over residues 573–617 (NQEERESSQADAAEAAREDHEDAEDLETKPTVDSEAEKAENEDRT). A disordered region spans residues 573-623 (NQEERESSQADAAEAAREDHEDAEDLETKPTVDSEAEKAENEDRTALPVLE). Lys601 is covalently cross-linked (Glycyl lysine isopeptide (Lys-Gly) (interchain with G-Cter in SUMO)).

This sequence belongs to the krueppel C2H2-type zinc-finger protein family. Post-translationally, monosumoylated at Lys-601 by CBX4 and UHRF2. Sumoylation may potentiate ZNF131 inhibition of estrogen signaling. Sumoylation does not interfere with ubiquitination. In terms of processing, ubiquitinated. Predominant expression is found in different brain areas such as the occipital and temporal lobe, the nucleus caudatus, hippocampus, and the cerebellum as well as in testis and thymus.

The protein resides in the nucleus. Its function is as follows. Plays a role during development and organogenesis as well as in the function of the adult central nervous system. May be involved in transcriptional regulation as a repressor of ESR1/ER-alpha signaling. The chain is Zinc finger protein 131 (ZNF131) from Homo sapiens (Human).